The sequence spans 176 residues: ATP-dependent protease subunit HslV (176 aa).

Residue T2 is part of the active site. The Na(+) site is built by G157, C160, and T163.

It belongs to the peptidase T1B family. HslV subfamily. A double ring-shaped homohexamer of HslV is capped on each side by a ring-shaped HslU homohexamer. The assembly of the HslU/HslV complex is dependent on binding of ATP.

The protein localises to the cytoplasm. It carries out the reaction ATP-dependent cleavage of peptide bonds with broad specificity.. Its activity is regulated as follows. Allosterically activated by HslU binding. Functionally, protease subunit of a proteasome-like degradation complex believed to be a general protein degrading machinery. The protein is ATP-dependent protease subunit HslV of Pseudomonas savastanoi pv. phaseolicola (strain 1448A / Race 6) (Pseudomonas syringae pv. phaseolicola (strain 1448A / Race 6)).